A 185-amino-acid chain; its full sequence is Elongation factor P (185 aa).

This sequence belongs to the elongation factor P family.

It is found in the cytoplasm. It participates in protein biosynthesis; polypeptide chain elongation. Involved in peptide bond synthesis. Stimulates efficient translation and peptide-bond synthesis on native or reconstituted 70S ribosomes in vitro. Probably functions indirectly by altering the affinity of the ribosome for aminoacyl-tRNA, thus increasing their reactivity as acceptors for peptidyl transferase. In Bacillus cereus (strain B4264), this protein is Elongation factor P.